Here is a 142-residue protein sequence, read N- to C-terminus: Hemoglobin subunit alpha (142 aa).

The Globin domain occupies 2-142 (VLSPADKSNV…VSTVLTSKYR (141 aa)). Ser4 bears the Phosphoserine mark. An N6-succinyllysine mark is found at Lys8 and Lys12. Lys17 is subject to N6-acetyllysine; alternate. At Lys17 the chain carries N6-succinyllysine; alternate. Tyr25 carries the post-translational modification Phosphotyrosine. The residue at position 36 (Ser36) is a Phosphoserine. An N6-succinyllysine modification is found at Lys41. Ser50 bears the Phosphoserine mark. His59 is a binding site for O2. His88 is a heme b binding site. At Ser103 the chain carries Phosphoserine. The residue at position 109 (Thr109) is a Phosphothreonine. Phosphoserine is present on residues Ser125 and Ser132. Phosphothreonine occurs at positions 135 and 138. Ser139 bears the Phosphoserine mark.

It belongs to the globin family. In terms of assembly, heterotetramer of two alpha chains and two beta chains. As to expression, red blood cells.

Functionally, involved in oxygen transport from the lung to the various peripheral tissues. Hemopressin acts as an antagonist peptide of the cannabinoid receptor CNR1. Hemopressin-binding efficiently blocks cannabinoid receptor CNR1 and subsequent signaling. The chain is Hemoglobin subunit alpha (HBA) from Ateles geoffroyi (Black-handed spider monkey).